A 160-amino-acid chain; its full sequence is Pyruvoyl-dependent arginine decarboxylase (160 aa).

Residue Ser-39 is modified to Pyruvic acid (Ser).

The protein belongs to the PdaD family. Pyruvate is required as a cofactor.

It catalyses the reaction L-arginine + H(+) = agmatine + CO2. This chain is Pyruvoyl-dependent arginine decarboxylase (pdaD), found in Halobacterium salinarum (strain ATCC 29341 / DSM 671 / R1).